The primary structure comprises 199 residues: NAD(P)H dehydrogenase (quinone) (199 aa).

The Flavodoxin-like domain maps to 4-190; sequence VLVLYYSAYG…AGARYQGRVI (187 aa). Residues 10–15 and 78–80 contribute to the FMN site; these read SAYGHI and TRF. NAD(+) is bound at residue Y12. W98 is a binding site for substrate. FMN-binding positions include 113–119 and H134; that span reads STATQHG.

This sequence belongs to the WrbA family. It depends on FMN as a cofactor.

The enzyme catalyses a quinone + NADH + H(+) = a quinol + NAD(+). It carries out the reaction a quinone + NADPH + H(+) = a quinol + NADP(+). In Bradyrhizobium sp. (strain BTAi1 / ATCC BAA-1182), this protein is NAD(P)H dehydrogenase (quinone).